We begin with the raw amino-acid sequence, 212 residues long: FMN-dependent NADH:quinone oxidoreductase 1 (212 aa).

FMN-binding positions include Ser10, 16–18 (SHS), 97–100 (MYNF), and 145–148 (SRGG).

Belongs to the azoreductase type 1 family. As to quaternary structure, homodimer. FMN is required as a cofactor.

The catalysed reaction is 2 a quinone + NADH + H(+) = 2 a 1,4-benzosemiquinone + NAD(+). It catalyses the reaction N,N-dimethyl-1,4-phenylenediamine + anthranilate + 2 NAD(+) = 2-(4-dimethylaminophenyl)diazenylbenzoate + 2 NADH + 2 H(+). Functionally, quinone reductase that provides resistance to thiol-specific stress caused by electrophilic quinones. In terms of biological role, also exhibits azoreductase activity. Catalyzes the reductive cleavage of the azo bond in aromatic azo compounds to the corresponding amines. The sequence is that of FMN-dependent NADH:quinone oxidoreductase 1 from Pseudomonas fluorescens (strain Pf0-1).